A 95-amino-acid chain; its full sequence is Protein TusB (95 aa).

It belongs to the DsrH/TusB family. As to quaternary structure, heterohexamer, formed by a dimer of trimers. The hexameric TusBCD complex contains 2 copies each of TusB, TusC and TusD. The TusBCD complex interacts with TusE.

It is found in the cytoplasm. Part of a sulfur-relay system required for 2-thiolation of 5-methylaminomethyl-2-thiouridine (mnm(5)s(2)U) at tRNA wobble positions. This Escherichia coli (strain ATCC 8739 / DSM 1576 / NBRC 3972 / NCIMB 8545 / WDCM 00012 / Crooks) protein is Protein TusB.